A 116-amino-acid polypeptide reads, in one-letter code: Iron-sulfur cluster insertion protein ErpA (116 aa).

Iron-sulfur cluster contacts are provided by Cys-44, Cys-108, and Cys-110.

The protein belongs to the HesB/IscA family. Homodimer. It depends on iron-sulfur cluster as a cofactor.

Required for insertion of 4Fe-4S clusters for at least IspG. In Francisella tularensis subsp. mediasiatica (strain FSC147), this protein is Iron-sulfur cluster insertion protein ErpA.